Reading from the N-terminus, the 343-residue chain is Tetraacyldisaccharide 4'-kinase (343 aa).

An ATP-binding site is contributed by 53–60 (TCGGAGKT).

This sequence belongs to the LpxK family.

The enzyme catalyses a lipid A disaccharide + ATP = a lipid IVA + ADP + H(+). The protein operates within glycolipid biosynthesis; lipid IV(A) biosynthesis; lipid IV(A) from (3R)-3-hydroxytetradecanoyl-[acyl-carrier-protein] and UDP-N-acetyl-alpha-D-glucosamine: step 6/6. Its function is as follows. Transfers the gamma-phosphate of ATP to the 4'-position of a tetraacyldisaccharide 1-phosphate intermediate (termed DS-1-P) to form tetraacyldisaccharide 1,4'-bis-phosphate (lipid IVA). In Bartonella quintana (strain Toulouse) (Rochalimaea quintana), this protein is Tetraacyldisaccharide 4'-kinase.